Consider the following 266-residue polypeptide: Vitamin B12-binding protein (266 aa).

An N-terminal signal peptide occupies residues methionine 1–alanine 22. In terms of domain architecture, Fe/B12 periplasmic-binding spans arginine 25–asparagine 266. Cyanocob(III)alamin contacts are provided by residues tyrosine 50 and aspartate 242–arginine 246. Cysteine 183 and cysteine 259 are joined by a disulfide.

Belongs to the BtuF family. In terms of assembly, the complex is composed of two ATP-binding proteins (BtuD), two transmembrane proteins (BtuC) and a solute-binding protein (BtuF).

The protein localises to the periplasm. In terms of biological role, part of the ABC transporter complex BtuCDF involved in vitamin B12 import. Binds vitamin B12 and delivers it to the periplasmic surface of BtuC. The protein is Vitamin B12-binding protein of Salmonella typhi.